A 106-amino-acid chain; its full sequence is Small ribosomal subunit protein uS17 (106 aa).

The protein belongs to the universal ribosomal protein uS17 family. As to quaternary structure, part of the 30S ribosomal subunit.

Functionally, one of the primary rRNA binding proteins, it binds specifically to the 5'-end of 16S ribosomal RNA. This Methanosphaera stadtmanae (strain ATCC 43021 / DSM 3091 / JCM 11832 / MCB-3) protein is Small ribosomal subunit protein uS17.